A 272-amino-acid polypeptide reads, in one-letter code: NAD kinase (272 aa).

D62 serves as the catalytic Proton acceptor. NAD(+) is bound by residues 62–63 (DG), R67, 129–130 (NE), R140, K157, D159, I167, 170–175 (SSYSSS), A194, and Q229.

The protein belongs to the NAD kinase family. A divalent metal cation is required as a cofactor.

It localises to the cytoplasm. It carries out the reaction NAD(+) + ATP = ADP + NADP(+) + H(+). In terms of biological role, involved in the regulation of the intracellular balance of NAD and NADP, and is a key enzyme in the biosynthesis of NADP. Catalyzes specifically the phosphorylation on 2'-hydroxyl of the adenosine moiety of NAD to yield NADP. The chain is NAD kinase from Thermoplasma acidophilum (strain ATCC 25905 / DSM 1728 / JCM 9062 / NBRC 15155 / AMRC-C165).